Consider the following 387-residue polypeptide: Deoxyguanosinetriphosphate triphosphohydrolase-like protein (387 aa).

The 132-residue stretch at 78 to 209 (RLTHSLEVAQ…ANLADEVAYN (132 aa)) folds into the HD domain.

This sequence belongs to the dGTPase family. Type 2 subfamily.

This Ralstonia nicotianae (strain ATCC BAA-1114 / GMI1000) (Ralstonia solanacearum) protein is Deoxyguanosinetriphosphate triphosphohydrolase-like protein.